The chain runs to 283 residues: Thymidylate synthase (283 aa).

DUMP is bound by residues arginine 31 and 145-146 (RR). Cysteine 165 acts as the Nucleophile in catalysis. Residues 185–188 (RSAD), asparagine 196, and 226–228 (HIY) each bind dUMP. A (6R)-5,10-methylene-5,6,7,8-tetrahydrofolate-binding site is contributed by aspartate 188. Serine 282 provides a ligand contact to (6R)-5,10-methylene-5,6,7,8-tetrahydrofolate.

Belongs to the thymidylate synthase family. Bacterial-type ThyA subfamily. In terms of assembly, homodimer.

The protein resides in the cytoplasm. The catalysed reaction is dUMP + (6R)-5,10-methylene-5,6,7,8-tetrahydrofolate = 7,8-dihydrofolate + dTMP. It participates in pyrimidine metabolism; dTTP biosynthesis. Catalyzes the reductive methylation of 2'-deoxyuridine-5'-monophosphate (dUMP) to 2'-deoxythymidine-5'-monophosphate (dTMP) while utilizing 5,10-methylenetetrahydrofolate (mTHF) as the methyl donor and reductant in the reaction, yielding dihydrofolate (DHF) as a by-product. This enzymatic reaction provides an intracellular de novo source of dTMP, an essential precursor for DNA biosynthesis. The polypeptide is Thymidylate synthase (Symbiobacterium thermophilum (strain DSM 24528 / JCM 14929 / IAM 14863 / T)).